Reading from the N-terminus, the 439-residue chain is tRNA-2-methylthio-N(6)-dimethylallyladenosine synthase (439 aa).

Residues 2–116 form the MTTase N-terminal domain; sequence LKVYIETMGC…ISQVIHKEKA (115 aa). [4Fe-4S] cluster is bound by residues Cys11, Cys47, Cys79, Cys149, Cys153, and Cys156. The 234-residue stretch at 135-368 folds into the Radical SAM core domain; that stretch reads KKAEVRSLLN…QNRHKEILEE (234 aa). The 67-residue stretch at 371-437 folds into the TRAM domain; the sequence is RLEVGKTHVV…KGRLMATTKN (67 aa).

This sequence belongs to the methylthiotransferase family. MiaB subfamily. As to quaternary structure, monomer. The cofactor is [4Fe-4S] cluster.

The protein localises to the cytoplasm. It catalyses the reaction N(6)-dimethylallyladenosine(37) in tRNA + (sulfur carrier)-SH + AH2 + 2 S-adenosyl-L-methionine = 2-methylsulfanyl-N(6)-dimethylallyladenosine(37) in tRNA + (sulfur carrier)-H + 5'-deoxyadenosine + L-methionine + A + S-adenosyl-L-homocysteine + 2 H(+). Its function is as follows. Catalyzes the methylthiolation of N6-(dimethylallyl)adenosine (i(6)A), leading to the formation of 2-methylthio-N6-(dimethylallyl)adenosine (ms(2)i(6)A) at position 37 in tRNAs that read codons beginning with uridine. This Helicobacter acinonychis (strain Sheeba) protein is tRNA-2-methylthio-N(6)-dimethylallyladenosine synthase.